A 589-amino-acid chain; its full sequence is Ectoderm-neural cortex protein 1 (589 aa).

A BTB domain is found at 46-114; it reads TDVLLHAGNR…AYSSRVIINE (69 aa). 6 Kelch repeats span residues 296 to 340, 341 to 388, 389 to 444, 446 to 492, 494 to 538, and 539 to 585; these read ALFL…AIGC, KVYI…ELKH, CLYV…SAKL, LFAF…VLGN, IFIM…ASGN, and KLYV…STWK.

Binds to RB1. Hypophosphorylated RB1 associates with ENC1 during neuronal differentiation, while hyperphosphorylated RB1 associates with ENC1 in undifferentiating cells. Part of a complex that contains CUL3, RBX1 and ENC1. Interacts indirectly with KEAP1. In terms of processing, ubiquitinated by E3 ubiquitin ligase complex formed by CUL3 and RBX1 and probably targeted for proteasome-independent degradation. Quinone-induced oxidative stress increases its ubiquitination. Detected in fetal brain tissue, moderate expression in fetal heart, lung and kidney. Highly expressed in adult brain, particularly high in the hippocampus and amygdala, and spinal cord. Detectable in adult pancreas. May be down-regulated in neuroblastoma tumors.

Its subcellular location is the nucleus matrix. The protein localises to the cytoplasm. It is found in the cytoskeleton. Actin-binding protein involved in the regulation of neuronal process formation and in differentiation of neural crest cells. Down-regulates transcription factor NF2L2/NRF2 by decreasing the rate of protein synthesis and not via a ubiquitin-mediated proteasomal degradation mechanism. The sequence is that of Ectoderm-neural cortex protein 1 (ENC1) from Homo sapiens (Human).